The chain runs to 77 residues: RNA-binding protein Hfq (77 aa).

One can recognise a Sm domain in the interval Asp-9–Val-69.

The protein belongs to the Hfq family. Homohexamer.

Its function is as follows. RNA chaperone that binds small regulatory RNA (sRNAs) and mRNAs to facilitate mRNA translational regulation in response to envelope stress, environmental stress and changes in metabolite concentrations. Also binds with high specificity to tRNAs. The chain is RNA-binding protein Hfq from Shouchella clausii (strain KSM-K16) (Alkalihalobacillus clausii).